Consider the following 135-residue polypeptide: Putative pre-16S rRNA nuclease (135 aa).

This sequence belongs to the YqgF nuclease family.

It is found in the cytoplasm. In terms of biological role, could be a nuclease involved in processing of the 5'-end of pre-16S rRNA. This is Putative pre-16S rRNA nuclease from Thermus thermophilus (strain ATCC 27634 / DSM 579 / HB8).